Consider the following 878-residue polypeptide: Serine/threonine-protein kinase N3 (878 aa).

3 REM-1 domains span residues 2–77, 86–165, and 169–238; these read EHRK…QVLL, SEPQ…SGSP, and PDLL…RLPP. Ser-164 is subject to Phosphoserine. The interval 461–525 is disordered; that stretch reads PNTASPPKGR…TPCTKRPHMD (65 aa). One can recognise a Protein kinase domain in the interval 548-807; that stretch reads FRCLAVLGRG…AEEIKVQPFF (260 aa). ATP-binding positions include 554 to 562 and Lys-577; that span reads LGRGHFGKV. The active-site Proton acceptor is the Asp-673. Residues Thr-707, Thr-711, and Thr-849 each carry the phosphothreonine modification. The AGC-kinase C-terminal domain maps to 808–878; the sequence is RTTNWQALLA…DFVSEQFLES (71 aa).

This sequence belongs to the protein kinase superfamily. AGC Ser/Thr protein kinase family. PKC subfamily. Autophosphorylated.

The protein resides in the nucleus. The protein localises to the cytoplasm. It is found in the perinuclear region. The enzyme catalyses L-seryl-[protein] + ATP = O-phospho-L-seryl-[protein] + ADP + H(+). The catalysed reaction is L-threonyl-[protein] + ATP = O-phospho-L-threonyl-[protein] + ADP + H(+). With respect to regulation, two specific sites, Thr-707 (activation loop of the kinase domain) and Thr-849 (turn motif), need to be phosphorylated for its full activation. Functionally, contributes to invasiveness in malignant prostate cancer. This Mus musculus (Mouse) protein is Serine/threonine-protein kinase N3 (Pkn3).